Here is a 352-residue protein sequence, read N- to C-terminus: Biotin synthase (352 aa).

In terms of domain architecture, Radical SAM core spans 44–262 (NRVQVSTLLS…LAVARILMPK (219 aa)). [4Fe-4S] cluster contacts are provided by cysteine 59, cysteine 63, and cysteine 66. [2Fe-2S] cluster contacts are provided by cysteine 103, cysteine 134, cysteine 194, and arginine 266.

Belongs to the radical SAM superfamily. Biotin synthase family. In terms of assembly, homodimer. [4Fe-4S] cluster serves as cofactor. [2Fe-2S] cluster is required as a cofactor.

The catalysed reaction is (4R,5S)-dethiobiotin + (sulfur carrier)-SH + 2 reduced [2Fe-2S]-[ferredoxin] + 2 S-adenosyl-L-methionine = (sulfur carrier)-H + biotin + 2 5'-deoxyadenosine + 2 L-methionine + 2 oxidized [2Fe-2S]-[ferredoxin]. The protein operates within cofactor biosynthesis; biotin biosynthesis; biotin from 7,8-diaminononanoate: step 2/2. Functionally, catalyzes the conversion of dethiobiotin (DTB) to biotin by the insertion of a sulfur atom into dethiobiotin via a radical-based mechanism. This is Biotin synthase from Pseudomonas entomophila (strain L48).